The sequence spans 157 residues: Small ribosomal subunit protein uS7 (157 aa).

It belongs to the universal ribosomal protein uS7 family. In terms of assembly, part of the 30S ribosomal subunit. Contacts proteins S9 and S11.

Its function is as follows. One of the primary rRNA binding proteins, it binds directly to 16S rRNA where it nucleates assembly of the head domain of the 30S subunit. Is located at the subunit interface close to the decoding center, probably blocks exit of the E-site tRNA. The protein is Small ribosomal subunit protein uS7 of Roseiflexus castenholzii (strain DSM 13941 / HLO8).